Consider the following 542-residue polypeptide: Membrane protein insertase YidC (542 aa).

The next 5 helical transmembrane spans lie at 7 to 27 (LLVM…QQDF), 338 to 358 (FALL…IIGV), 417 to 437 (MGGC…YWTF), 455 to 475 (LSAQ…MFLL), and 494 to 514 (FMPV…VLYW).

It belongs to the OXA1/ALB3/YidC family. Type 1 subfamily. In terms of assembly, interacts with the Sec translocase complex via SecD. Specifically interacts with transmembrane segments of nascent integral membrane proteins during membrane integration.

The protein localises to the cell inner membrane. Functionally, required for the insertion and/or proper folding and/or complex formation of integral membrane proteins into the membrane. Involved in integration of membrane proteins that insert both dependently and independently of the Sec translocase complex, as well as at least some lipoproteins. Aids folding of multispanning membrane proteins. The protein is Membrane protein insertase YidC of Actinobacillus pleuropneumoniae serotype 7 (strain AP76).